The chain runs to 276 residues: Rhomboid protease GlpG (276 aa).

A run of 6 helical transmembrane segments spans residues 94–114 (GPVTWIVMLACVLVYIAMSLI), 142–162 (IFMHFSLMHILFNLLWWWYLG), 169–189 (LGSGKLIVITVISALLSGYVQ), 192–212 (FSGPWFGGLSGVVYALMGYVW), 229–249 (LIIFALLWIVAGWFDWFGMSM), and 250–270 (ANGAHIAGLIVGLAMAFVDTL). Residue S201 is the Nucleophile of the active site. H254 is an active-site residue.

Belongs to the peptidase S54 family.

It is found in the cell inner membrane. The catalysed reaction is Cleaves type-1 transmembrane domains using a catalytic dyad composed of serine and histidine that are contributed by different transmembrane domains.. Its function is as follows. Rhomboid-type serine protease that catalyzes intramembrane proteolysis. The polypeptide is Rhomboid protease GlpG (Salmonella dublin (strain CT_02021853)).